A 153-amino-acid polypeptide reads, in one-letter code: Pheromone-binding protein Gp-9 (153 aa).

Positions 1-19 (MKTFVLHIFIFALVAFASA) are cleaved as a signal peptide. 3 disulfide bridges follow: Cys-37-Cys-77, Cys-73-Cys-129, and Cys-118-Cys-138.

It belongs to the PBP/GOBP family. Homodimer.

Its subcellular location is the secreted. Its function is as follows. Colony queen number, a major feature of social organization, is associated with worker genotype for Gp-9. Colonies are headed by either a single reproductive queen (monogyne form) or multiple queens (polygyne form). Differences in worker Gp-9 genotypes between social forms may cause differences in workers' abilities to recognize queens and regulate their numbers. The sequence is that of Pheromone-binding protein Gp-9 from Solenopsis interrupta (Fire ant).